The chain runs to 337 residues: Pentalenene synthase (337 aa).

The Mg(2+) site is built by Asp-80, Asp-84, Asn-219, Ser-223, and Glu-227. Positions 80–84 match the DDXXD motif motif; the sequence is DDLFD.

The protein belongs to the terpene synthase family. As to quaternary structure, monomer. The cofactor is Mg(2+).

It carries out the reaction (2E,6E)-farnesyl diphosphate = pentalenene + diphosphate. It functions in the pathway sesquiterpene biosynthesis; pentalenene biosynthesis; pentalenene from farnesyl diphosphate: step 1/1. Its pathway is antibiotic biosynthesis; pentalenolactone biosynthesis. In terms of biological role, catalyzes the cyclization of farnesyl diphosphate (FPP) to the tricyclic sesquiterpene pentalenene, which is the hydrocarbon precursor of the pentalenolactone family of antibiotics produced by a variety of Streptomyces species. In Streptomyces arenae, this protein is Pentalenene synthase (pntA).